A 491-amino-acid polypeptide reads, in one-letter code: Probable cytosol aminopeptidase (491 aa).

The Mn(2+) site is built by lysine 264 and aspartate 269. Lysine 276 is a catalytic residue. Mn(2+) contacts are provided by aspartate 287, aspartate 346, and glutamate 348. Arginine 350 is a catalytic residue.

The protein belongs to the peptidase M17 family. It depends on Mn(2+) as a cofactor.

It is found in the cytoplasm. The enzyme catalyses Release of an N-terminal amino acid, Xaa-|-Yaa-, in which Xaa is preferably Leu, but may be other amino acids including Pro although not Arg or Lys, and Yaa may be Pro. Amino acid amides and methyl esters are also readily hydrolyzed, but rates on arylamides are exceedingly low.. It catalyses the reaction Release of an N-terminal amino acid, preferentially leucine, but not glutamic or aspartic acids.. Functionally, presumably involved in the processing and regular turnover of intracellular proteins. Catalyzes the removal of unsubstituted N-terminal amino acids from various peptides. This Xylella fastidiosa (strain M12) protein is Probable cytosol aminopeptidase.